Reading from the N-terminus, the 444-residue chain is E1B 55 kDa protein (444 aa).

The interval 1 to 27 (MEQDSDLESGRATNQRPPRVRVRGAGV) is disordered. Phosphoserine is present on residues Ser-438 and Ser-439.

This sequence belongs to the adenoviridae E1B 55 kDa protein family. Interacts with host PML-4 and PML-5; this interaction promotes efficient subnuclear targeting of E1B-55K to PML nuclear bodies. Interacts with E4-ORF3 protein. Interacts with E4-ORF6 protein.

The protein resides in the host nucleus. It localises to the host cytoplasm. In terms of biological role, plays a major role to prevent cellular inhibition of viral genome replication. Assembles an SCF-like E3 ubiquitin ligase complex based on the cellular proteins ELOB, ELOC, CUL5 and RBX1, in cooperation with viral E4orf6. This viral RING-type ligase ubiquitinates cellular substrates and targets them to proteasomal degradation: TP53/p53, LIG4, MRE11-RAD50-NBS1 (MRN) complex, ITGA3, DAXX and BLM. E1B-55K probably acts as the substrate-specific adapter of the SCF-like E3 ubiquitin ligase complex. Degradation of host TP53/p53 activity is essential for preventing E1A-induced TP53 accumulation that would otherwise lead to cell apoptosis and growth arrest. E1B-55K also inactivates TP53 transcription-factor activity by binding its transactivation domain. E1B-55K also functions as a SUMO1 E3 ligase for TP53 which causes the latter to be sequestered in promyelocytic leukemia (PML) nuclear bodies thereby contributing to maximal inhibition of TP53 function. In Canis lupus familiaris (Dog), this protein is E1B 55 kDa protein.